The chain runs to 499 residues: Chaperone SurA (499 aa).

A signal peptide spans 1-36 (MKRQEFALFSLTLMLSPWRRVLLPAVLAAMAGPALA). PpiC domains follow at residues 231–333 (PTEF…KLTA) and 352–450 (ITQT…QVEN).

Its subcellular location is the periplasm. It catalyses the reaction [protein]-peptidylproline (omega=180) = [protein]-peptidylproline (omega=0). Chaperone involved in the correct folding and assembly of outer membrane proteins. Recognizes specific patterns of aromatic residues and the orientation of their side chains, which are found more frequently in integral outer membrane proteins. May act in both early periplasmic and late outer membrane-associated steps of protein maturation. This is Chaperone SurA from Cupriavidus pinatubonensis (strain JMP 134 / LMG 1197) (Cupriavidus necator (strain JMP 134)).